A 1043-amino-acid polypeptide reads, in one-letter code: Non-canonical nonribosomal peptide synthetase cpsA (1043 aa).

The adenylation (A) domain stretch occupies residues 41–386 (RRAQENPSAP…IGGDGVSPGY (346 aa)). The region spanning 549–626 (QDASTTISRL…QMARYVDEGG (78 aa)) is the Carrier domain. Position 586 is an O-(pantetheine 4'-phosphoryl)serine (serine 586). Positions 671–914 (MTGATGFVGA…FVPVDYLVDA (244 aa)) are short-chain dehydrogenase/reductase (R) domain. The region spanning 672-915 (TGATGFVGAF…VPVDYLVDAI (244 aa)) is the Thioester reductase (TE) domain.

Belongs to the NRP synthetase family. Pantetheine 4'-phosphate serves as cofactor.

It carries out the reaction L-valine + ATP + NADPH + H(+) = L-valinal + AMP + diphosphate + NADP(+). The enzyme catalyses L-tryptophan + ATP + NADPH + H(+) = L-tryptophanal + AMP + diphosphate + NADP(+). It functions in the pathway alkaloid biosynthesis. Its function is as follows. Non-canonical nonribosomal peptide synthetase; part of the gene cluster that mediates the biosynthesis of campesine G, a dimeric indole piperazine alkaloid that shows good insecticidal activity Galleria mellonella. CpsA catalyzes the first steps of the pathway by producing L-tryptophanal and L-valinal from their respective amino-acids. These products condensate spontaneously to form trypyl-valyl pyrazine also known as didehydrocampesine A. The NmrA-like family domain-containing oxidoreductase cpsB is the next enzyme in cps pathway and reduces the unstable didehydrocampesine A to campesine A. The methyltransferase cpsF and the acetyltransferase cpsE both recognize N13 of piperazine ring to carry out methylation and acetylation of campesine A to produce campesine C and B, respectively. The cytochrome P450 monooxygenase cpsD then acts as a dimerase that catalyzes oxidative heterocoupling between campesine B and C to produce heterodimers with unexpected 6/5/6/6/6/6/5/6 eight-ring scaffold called campesine D. Finally,the cytochrome P450 monooxygenase cpsC is a regioselective dehydrogenase that catalyzes dehydrogenation reaction towards C2-N1 to produce campesine G. The sequence is that of Non-canonical nonribosomal peptide synthetase cpsA from Aspergillus campestris (strain IBT 28561).